Reading from the N-terminus, the 206-residue chain is Threonine efflux protein (206 aa).

The chain crosses the membrane as a helical span at residues 1–21; the sequence is MLMLFLTVAMVHIVALMSPGP. Residues 22–43 lie on the Periplasmic side of the membrane; the sequence is DFFFVSQTAVSRSRKEAMMGVL. The chain crosses the membrane as a helical span at residues 44-64; it reads GITCGVMVWAGIALLGLHLII. The Cytoplasmic segment spans residues 65–66; the sequence is EK. A helical membrane pass occupies residues 67-87; the sequence is MAWLHTLIMVGGGLYLCWMGY. At 88–149 the chain is on the periplasmic side; the sequence is QMLRGALKKE…VGDNVGTTAR (62 aa). A helical transmembrane segment spans residues 150-173; the sequence is WGIFALIIVETLAWFTVVASLFAL. At 174–206 the chain is on the cytoplasmic side; it reads PQMRRGYQRLAKWIDGFAGALFAGFGIHLIISR.

This sequence belongs to the Rht family.

It is found in the cell inner membrane. Functionally, conducts the efflux of threonine. The protein is Threonine efflux protein (rhtC) of Escherichia coli O157:H7.